Reading from the N-terminus, the 290-residue chain is 33 kDa chaperonin (290 aa).

2 disulfide bridges follow: Cys-235–Cys-237 and Cys-268–Cys-271.

It belongs to the HSP33 family. Post-translationally, under oxidizing conditions two disulfide bonds are formed involving the reactive cysteines. Under reducing conditions zinc is bound to the reactive cysteines and the protein is inactive.

It localises to the cytoplasm. Functionally, redox regulated molecular chaperone. Protects both thermally unfolding and oxidatively damaged proteins from irreversible aggregation. Plays an important role in the bacterial defense system toward oxidative stress. The protein is 33 kDa chaperonin of Streptococcus pyogenes serotype M5 (strain Manfredo).